The following is a 258-amino-acid chain: Alpha-fibrinogenase-like (258 aa).

A signal peptide spans 1-18 (MVLIRVLANLLVLQLSYA). Residues 19–24 (QKSSEL) constitute a propeptide that is removed on maturation. In terms of domain architecture, Peptidase S1 spans 25-249 (VVGGHPCNIY…YTDWIHSIIA (225 aa)). Intrachain disulfides connect C31/C163, C50/C66, C98/C256, C142/C210, C174/C189, and C200/C225. N-linked (GlcNAc...) asparagine glycosylation is present at N44. Active-site charge relay system residues include H65 and D110. The active-site Charge relay system is the S204.

This sequence belongs to the peptidase S1 family. Snake venom subfamily. In terms of assembly, monomer. As to expression, expressed by the venom gland.

The protein resides in the secreted. In terms of biological role, degrades alpha chain of fibrinogen (FGA), and has strong caseinolytic activity. Cleaves oxidized insulin B-chain at '40-Tyr-|-Leu-41', '48-Phe-|-Phe-49' and '49-Phe-|-Tyr-50', and glucagon at the bonds '62-Tyr-|-Ser-63', 66-Leu-|-Asp-67' and '78-Leu-|-Met-79' bonds. The polypeptide is Alpha-fibrinogenase-like (Daboia siamensis (Eastern Russel's viper)).